A 115-amino-acid chain; its full sequence is Large ribosomal subunit protein bL19 (115 aa).

Belongs to the bacterial ribosomal protein bL19 family.

Functionally, this protein is located at the 30S-50S ribosomal subunit interface and may play a role in the structure and function of the aminoacyl-tRNA binding site. The polypeptide is Large ribosomal subunit protein bL19 (Oleidesulfovibrio alaskensis (strain ATCC BAA-1058 / DSM 17464 / G20) (Desulfovibrio alaskensis)).